The following is a 262-amino-acid chain: Cyclin-dependent kinase inhibitor 1 (262 aa).

A disordered region spans residues 140–212 (SDVAEAGSEH…SAQQATRPKI (73 aa)). The span at 160–169 (SGRDRERRET) shows a compositional bias: basic and acidic residues. Positions 198–208 (SAATASAQQAT) are enriched in low complexity.

Belongs to the CDI family. ICK/KRP subfamily. In terms of tissue distribution, expressed in roots, stems, leaves and apex.

Regulates the production of endosperm cells, affecting seed filling and embryo development. Regulates endoreduplication of endosperm cells. May play a role in the exit from the mitotic cell cycle during rice grain formation. Inhibitis leaf elongation rates by decreasing cell number, that is partly compensated by increased cell size. May not affect growth rate or cell size of the primary root. This chain is Cyclin-dependent kinase inhibitor 1 (KRP1), found in Oryza sativa subsp. japonica (Rice).